A 156-amino-acid polypeptide reads, in one-letter code: Mitochondrial intermembrane space cysteine motif-containing protein MIX17 (156 aa).

The transit peptide at 1–21 (MARSRGSSRPISRSRPTQTRS) directs the protein to the mitochondrion. Residues 1 to 21 (MARSRGSSRPISRSRPTQTRS) are compositionally biased toward low complexity. 2 disordered regions span residues 1–50 (MARS…GAQT) and 78–110 (AGIT…QTQT). Residues 84 to 110 (FSGSGSDSAPVEQQQQNMANTSGQTQT) show a composition bias toward polar residues. One can recognise a CHCH domain in the interval 115–156 (GRTCEIDARNFTRCLDENNGNFQICDYYLQQLKACQEAARQY). The Cx9C motif motif lies at 118–128 (CEIDARNFTRC). Intrachain disulfides connect Cys118–Cys149 and Cys128–Cys139.

The protein localises to the mitochondrion intermembrane space. The sequence is that of Mitochondrial intermembrane space cysteine motif-containing protein MIX17 (MIX17) from Saccharomyces cerevisiae (strain ATCC 204508 / S288c) (Baker's yeast).